Reading from the N-terminus, the 387-residue chain is Phosphoglycerate kinase (387 aa).

Substrate contacts are provided by residues 21 to 23 (DLN), Arg-36, 59 to 62 (HLGR), Arg-113, and Arg-146. ATP contacts are provided by residues Lys-197, Glu-314, and 340-343 (GGDT).

The protein belongs to the phosphoglycerate kinase family. Monomer.

Its subcellular location is the cytoplasm. The enzyme catalyses (2R)-3-phosphoglycerate + ATP = (2R)-3-phospho-glyceroyl phosphate + ADP. Its pathway is carbohydrate degradation; glycolysis; pyruvate from D-glyceraldehyde 3-phosphate: step 2/5. This is Phosphoglycerate kinase from Pseudomonas fluorescens (strain SBW25).